The chain runs to 172 residues: MDIKLDKNVVKMVMSSKEEELMPSIGWEGKKEIPVLITNVETKIPKGHPVIFKMVPIDEGKVTAVFIFLTVGEQLWTVFNPANTYYRLFLKAMTEADKLAICFPNKKAISIKTTEEMKKAARILLDTIEEFQWDSEEFAEALEKIAENYTLEDIEMIAVQEWKKRTGQEKEN.

This is an uncharacterized protein from Aquifex aeolicus (strain VF5).